The following is a 179-amino-acid chain: Exosome complex component Csl4 (179 aa).

Positions 58-137 constitute an S1 motif domain; it reads GDVVLGRVVD…RLSTKEEEMG (80 aa). Zn(2+) is bound by residues cysteine 143, cysteine 146, cysteine 159, and cysteine 162.

This sequence belongs to the CSL4 family. As to quaternary structure, component of the archaeal exosome complex. Forms a trimer of Rrp4 and/or Csl4 subunits. The trimer associates with a hexameric ring-like arrangement composed of 3 Rrp41-Rrp42 heterodimers. Interacts with DnaG.

It is found in the cytoplasm. Its function is as follows. Non-catalytic component of the exosome, which is a complex involved in RNA degradation. Increases the RNA binding and the efficiency of RNA degradation. Helpful for the interaction of the exosome with A-poor RNAs. This Archaeoglobus fulgidus (strain ATCC 49558 / DSM 4304 / JCM 9628 / NBRC 100126 / VC-16) protein is Exosome complex component Csl4.